Consider the following 467-residue polypeptide: Serine/threonine-protein phosphatase 2A 56 kDa regulatory subunit epsilon isoform (467 aa).

Residues 1–39 are disordered; the sequence is MSSAPTTPPSVDKVDGFSRKSVRKARQKRSQSSSQFRSQ. The residue at position 2 (Ser-2) is an N-acetylserine. A Phosphothreonine modification is found at Thr-7. The span at 20–29 shows a compositional bias: basic residues; the sequence is KSVRKARQKR. Residues Ser-30, Ser-32, and Ser-34 each carry the phosphoserine modification. Over residues 30–39 the composition is skewed to low complexity; sequence SQSSSQFRSQ.

Belongs to the phosphatase 2A regulatory subunit B56 family. As to quaternary structure, PP2A consists of a common heterodimeric core enzyme, composed of a 36 kDa catalytic subunit (subunit C) and a 65 kDa constant regulatory subunit (PR65 or subunit A), that associates with a variety of regulatory subunits. Proteins that associate with the core dimer include three families of regulatory subunits B (the R2/B/PR55/B55, R3/B''/PR72/PR130/PR59 and R5/B'/B56 families), the 48 kDa variable regulatory subunit, viral proteins, and cell signaling molecules. Interacts with SGO1. Found in a complex with at least ARL2, PPP2CB; PPP2R1A, PPP2R2A, PPP2R5E and TBCD.

It localises to the cytoplasm. The B regulatory subunit might modulate substrate selectivity and catalytic activity, and might also direct the localization of the catalytic enzyme to a particular subcellular compartment. Interacts with cyclin G in vitro. The sequence is that of Serine/threonine-protein phosphatase 2A 56 kDa regulatory subunit epsilon isoform (Ppp2r5e) from Mus musculus (Mouse).